The sequence spans 352 residues: Phospho-N-acetylmuramoyl-pentapeptide-transferase (352 aa).

The next 10 membrane-spanning stretches (helical) occupy residues 10–30 (YMFF…ALFL), 67–87 (TMGG…CADL), 88–108 (NNFY…IGLV), 129–149 (LLSQ…MGIN), 159–179 (YALF…IISS), 191–211 (GLAT…LYLS), 227–247 (GLGE…GFLW), 255–275 (VFMG…LGIV), 280–300 (ILLL…ILQV), and 329–349 (KIIV…LISI).

Belongs to the glycosyltransferase 4 family. MraY subfamily. It depends on Mg(2+) as a cofactor.

Its subcellular location is the cell inner membrane. The catalysed reaction is UDP-N-acetyl-alpha-D-muramoyl-L-alanyl-gamma-D-glutamyl-meso-2,6-diaminopimeloyl-D-alanyl-D-alanine + di-trans,octa-cis-undecaprenyl phosphate = di-trans,octa-cis-undecaprenyl diphospho-N-acetyl-alpha-D-muramoyl-L-alanyl-D-glutamyl-meso-2,6-diaminopimeloyl-D-alanyl-D-alanine + UMP. It functions in the pathway cell wall biogenesis; peptidoglycan biosynthesis. Its function is as follows. Catalyzes the initial step of the lipid cycle reactions in the biosynthesis of the cell wall peptidoglycan: transfers peptidoglycan precursor phospho-MurNAc-pentapeptide from UDP-MurNAc-pentapeptide onto the lipid carrier undecaprenyl phosphate, yielding undecaprenyl-pyrophosphoryl-MurNAc-pentapeptide, known as lipid I. This Campylobacter lari (strain RM2100 / D67 / ATCC BAA-1060) protein is Phospho-N-acetylmuramoyl-pentapeptide-transferase.